The sequence spans 1153 residues: uncharacterized protein (1153 aa).

Disordered stretches follow at residues 164-193 (TTIK…QIDD), 224-245 (DNYD…DDDK), 294-316 (KSPQ…QSKH), 332-427 (EHKL…KNKK), 613-648 (LSML…EGEN), 683-703 (QQQQ…EEMS), 717-740 (KSDD…SKRK), 772-819 (NKKL…KTIE), 838-874 (ASSG…EDEK), and 942-1106 (NNNN…NNEV). Residues 169 to 179 (LPPPLPQPQPQ) show a composition bias toward pro residues. Composition is skewed to low complexity over residues 231 to 240 (NNNNNNNNSN), 298 to 312 (KLKL…QQQK), 336 to 391 (QQQQ…TPKK), and 399 to 423 (NNVN…NNNN). The span at 613–625 (LSMLDSTNDGSSQ) shows a compositional bias: polar residues. Basic and acidic residues predominate over residues 687 to 699 (QEKEKQQQEKQQD). Low complexity predominate over residues 721–734 (NNNNNDNNNNNNNN). The segment covering 772–784 (NKKLRVDSEDQQT) has biased composition (basic and acidic residues). Composition is skewed to low complexity over residues 788 to 808 (TTTT…NNNN) and 839 to 854 (SSGG…QNDS). Residues 856–874 (TTKEKERSETIKTHNEDEK) show a composition bias toward basic and acidic residues. Over residues 942 to 987 (NNNNNNNNNINNINNIGNKNTTVNNSNHSNHSNNNINNNNIFKNSN) the composition is skewed to low complexity. Composition is skewed to polar residues over residues 988–998 (PIVDTNFSSTT) and 1005–1015 (QSKIFTGNQLP). Over residues 1019–1059 (INNENVVNNNNNNEINNTTTTTTNNNSGIHKNNNNYNSDNS) the composition is skewed to low complexity. Residues 1064 to 1081 (DGLKQEKEEQKEEQKENK) show a composition bias toward basic and acidic residues. Positions 1082–1105 (NNNNNNNNNNNNNNNNNNNNNNNE) are enriched in low complexity.

This is an uncharacterized protein from Dictyostelium discoideum (Social amoeba).